A 95-amino-acid chain; its full sequence is Small ribosomal subunit protein bS6 (95 aa).

It belongs to the bacterial ribosomal protein bS6 family.

Its function is as follows. Binds together with bS18 to 16S ribosomal RNA. This Clostridium kluyveri (strain NBRC 12016) protein is Small ribosomal subunit protein bS6.